We begin with the raw amino-acid sequence, 397 residues long: Elongation factor Tu-1 (397 aa).

A tr-type G domain is found at 10–206 (KPHVNIGTIG…AVDENIPEPE (197 aa)). Positions 19 to 26 (GHIDHGKT) are G1. 19-26 (GHIDHGKT) is a binding site for GTP. Position 26 (T26) interacts with Mg(2+). The G2 stretch occupies residues 62–66 (GITIS). The segment at 83 to 86 (DCPG) is G3. Residues 83 to 87 (DCPGH) and 138 to 141 (NKAD) contribute to the GTP site. The interval 138 to 141 (NKAD) is G4. The tract at residues 176–178 (SAL) is G5. Residue T386 is modified to Phosphothreonine.

The protein belongs to the TRAFAC class translation factor GTPase superfamily. Classic translation factor GTPase family. EF-Tu/EF-1A subfamily. Monomer. Post-translationally, phosphorylated on threonine and serine.

It is found in the cytoplasm. It carries out the reaction GTP + H2O = GDP + phosphate + H(+). In terms of biological role, GTP hydrolase that promotes the GTP-dependent binding of aminoacyl-tRNA to the A-site of ribosomes during protein biosynthesis. This is Elongation factor Tu-1 from Streptomyces collinus.